The primary structure comprises 354 residues: Uroporphyrinogen decarboxylase (354 aa).

Residues 27 to 31 (RQAGR), Asp77, Tyr154, Thr209, and His327 contribute to the substrate site.

Belongs to the uroporphyrinogen decarboxylase family. In terms of assembly, homodimer.

The protein resides in the cytoplasm. The catalysed reaction is uroporphyrinogen III + 4 H(+) = coproporphyrinogen III + 4 CO2. It functions in the pathway porphyrin-containing compound metabolism; protoporphyrin-IX biosynthesis; coproporphyrinogen-III from 5-aminolevulinate: step 4/4. Catalyzes the decarboxylation of four acetate groups of uroporphyrinogen-III to yield coproporphyrinogen-III. The chain is Uroporphyrinogen decarboxylase from Edwardsiella ictaluri (strain 93-146).